An 862-amino-acid chain; its full sequence is Protein translocase subunit SecA (862 aa).

Residues Gln-88, Gly-106–Thr-110, and Asp-506 contribute to the ATP site. Residues Cys-839, Cys-841, Cys-850, and His-851 each coordinate Zn(2+).

It belongs to the SecA family. As to quaternary structure, monomer and homodimer. Part of the essential Sec protein translocation apparatus which comprises SecA, SecYEG and auxiliary proteins SecDF-YajC and YidC. It depends on Zn(2+) as a cofactor.

The protein resides in the cell inner membrane. It localises to the cytoplasm. The catalysed reaction is ATP + H2O + cellular proteinSide 1 = ADP + phosphate + cellular proteinSide 2.. Part of the Sec protein translocase complex. Interacts with the SecYEG preprotein conducting channel. Has a central role in coupling the hydrolysis of ATP to the transfer of proteins into and across the cell membrane, serving as an ATP-driven molecular motor driving the stepwise translocation of polypeptide chains across the membrane. The chain is Protein translocase subunit SecA from Campylobacter jejuni subsp. doylei (strain ATCC BAA-1458 / RM4099 / 269.97).